We begin with the raw amino-acid sequence, 153 residues long: Regulator of ribonuclease activity B (153 aa).

Residues 114–153 (DPNADDDEYGDDGEFLDDEDEYGDDGEFFDDEDEEEPRVH) are disordered. Positions 115-153 (PNADDDEYGDDGEFLDDEDEYGDDGEFFDDEDEEEPRVH) are enriched in acidic residues.

Belongs to the RraB family. As to quaternary structure, interacts with the C-terminal region of Rne.

Its subcellular location is the cytoplasm. In terms of biological role, globally modulates RNA abundance by binding to RNase E (Rne) and regulating its endonucleolytic activity. Can modulate Rne action in a substrate-dependent manner by altering the composition of the degradosome. This chain is Regulator of ribonuclease activity B, found in Haemophilus influenzae (strain ATCC 51907 / DSM 11121 / KW20 / Rd).